A 150-amino-acid polypeptide reads, in one-letter code: MTNSFQNSRRDLRERAFQALFNIEMGAELLAASQFAYGYDKVTREDAQVLELPIFLLSLVTGVNNHKEELDNLISTHLKKGWSLERLTLTDKTLLRLGLFEIKYFDETPDRVALNEIIEVAKKYSDETSAKFINGLLSQYVSEAPSANKS.

The protein belongs to the NusB family.

Its function is as follows. Involved in transcription antitermination. Required for transcription of ribosomal RNA (rRNA) genes. Binds specifically to the boxA antiterminator sequence of the ribosomal RNA (rrn) operons. This chain is Transcription antitermination protein NusB, found in Streptococcus pyogenes serotype M2 (strain MGAS10270).